A 907-amino-acid polypeptide reads, in one-letter code: Protein translocase subunit SecA (907 aa).

ATP-binding positions include glutamine 86, 104–108, and aspartate 511; that span reads GEGKT. Basic and acidic residues-rich tracts occupy residues 838-856 and 869-888; these read AQEE…HESV and EEAP…KRND. The interval 838–907 is disordered; that stretch reads AQEEWKESMS…YKQCHGKVVD (70 aa). Zn(2+)-binding residues include cysteine 890, cysteine 892, cysteine 901, and histidine 902. Residues 896–907 show a composition bias toward basic residues; that stretch reads KKYKQCHGKVVD.

It belongs to the SecA family. Monomer and homodimer. Part of the essential Sec protein translocation apparatus which comprises SecA, SecYEG and auxiliary proteins SecDF-YajC and YidC. Requires Zn(2+) as cofactor.

The protein resides in the cell inner membrane. It is found in the cytoplasm. It carries out the reaction ATP + H2O + cellular proteinSide 1 = ADP + phosphate + cellular proteinSide 2.. In terms of biological role, part of the Sec protein translocase complex. Interacts with the SecYEG preprotein conducting channel. Has a central role in coupling the hydrolysis of ATP to the transfer of proteins into and across the cell membrane, serving both as a receptor for the preprotein-SecB complex and as an ATP-driven molecular motor driving the stepwise translocation of polypeptide chains across the membrane. In Francisella philomiragia subsp. philomiragia (strain ATCC 25017 / CCUG 19701 / FSC 153 / O#319-036), this protein is Protein translocase subunit SecA.